Reading from the N-terminus, the 115-residue chain is NADH-ubiquinone oxidoreductase chain 3 (115 aa).

Helical transmembrane passes span 4–24, 55–75, and 87–107; these read LITM…AFWL, FFLV…LLPL, and TMMV…YEWL.

The protein belongs to the complex I subunit 3 family. As to quaternary structure, core subunit of respiratory chain NADH dehydrogenase (Complex I) which is composed of 45 different subunits. Interacts with TMEM186. Interacts with TMEM242.

Its subcellular location is the mitochondrion inner membrane. The catalysed reaction is a ubiquinone + NADH + 5 H(+)(in) = a ubiquinol + NAD(+) + 4 H(+)(out). In terms of biological role, core subunit of the mitochondrial membrane respiratory chain NADH dehydrogenase (Complex I) which catalyzes electron transfer from NADH through the respiratory chain, using ubiquinone as an electron acceptor. Essential for the catalytic activity of complex I. The protein is NADH-ubiquinone oxidoreductase chain 3 of Notiomys edwardsii (Edwards's long-clawed mouse).